We begin with the raw amino-acid sequence, 211 residues long: Claudin-7 (211 aa).

Over 1 to 7 the chain is Cytoplasmic; the sequence is MANSGLQ. The chain crosses the membrane as a helical span at residues 8–28; that stretch reads LLGFSMALLGWVGLVACTAIP. At 29–81 the chain is on the extracellular side; that stretch reads QWQMSSYAGDNIITAQAMYKGLWMDCVTQSTGMMSCKMYDSVLALSAALQATR. Residues 82 to 102 traverse the membrane as a helical segment; sequence ALMVVSLVLGFLAMFVATMGM. The Cytoplasmic portion of the chain corresponds to 103–117; sequence KCTRCGGDDKVKKAR. The helical transmembrane segment at 118–138 threads the bilayer; sequence IAMGGGIIFIVAGLAALVACS. Residues 139–160 lie on the Extracellular side of the membrane; the sequence is WYGHQIVTDFYNPLIPTNIKYE. A helical membrane pass occupies residues 161-181; it reads FGPAIFIGWAGSALVILGGAL. Topologically, residues 182-211 are cytoplasmic; that stretch reads LSCSCPGNESKAGYRVPRSYPKSNSSKEYV. Positions 210-211 are interactions with TJP1, TJP2 and TJP3; that stretch reads YV.

It belongs to the claudin family. Directly interacts with TJP1/ZO-1, TJP2/ZO-2 and TJP3/ZO-3. The phosphorylated form interacts with EPCAM. Does not interact with CD81. Post-translationally, phosphorylated. In terms of tissue distribution, expressed in kidney, lung and prostate. Isoform 1 seems to be predominant, except in some normal prostate samples, where isoform 2 is the major form. Down-regulated in breast cancers, including ductal carcinoma in situ (DCIS), lobular carcinoma in situ (LCIS) and invasive ductal carcinoma (IDC) (at protein level), as well as in several cancer cell lines. Loss of expression correlates with histological grade, occurring predominantly in high-grade lesions.

It is found in the cell membrane. It localises to the basolateral cell membrane. The protein resides in the cell junction. Its subcellular location is the tight junction. Its function is as follows. Plays a major role in tight junction-specific obliteration of the intercellular space. The protein is Claudin-7 (CLDN7) of Homo sapiens (Human).